A 520-amino-acid polypeptide reads, in one-letter code: CBL-interacting serine/threonine-protein kinase 18 (520 aa).

2 disordered regions span residues 1–29 and 48–67; these read MAQA…PHPK and TDKD…SPRN. Positions 17 to 29 are enriched in pro residues; sequence PDPPPPPPPPHPK. Over residues 55-66 the composition is skewed to low complexity; the sequence is SPQSPRSPRSPR. Positions 74–328 constitute a Protein kinase domain; the sequence is YELGKLLGHG…IPEIMKNRWF (255 aa). Residues 80 to 88 and Lys-103 contribute to the ATP site; that span reads LGHGTFAKV. Asp-196 (proton acceptor) is an active-site residue. An activation loop region spans residues 214 to 243; the sequence is DFGLSAVAEQLRQDGLCHTFCGTPAYIAPE. Phosphoserine is present on Ser-218. Phosphothreonine is present on Thr-232. The tract at residues 349 to 368 is disordered; the sequence is EDEEEEASSSGRSSTVSESD. Low complexity predominate over residues 356 to 366; the sequence is SSSGRSSTVSE. One can recognise an NAF domain in the interval 382–406; sequence PRPSSLNAFDIISFSSGFDLSGLFE. A PPI region spans residues 410–439; sequence GEGTRFVSGAPVSKIISKLEEIAKIVSFTV.

Belongs to the protein kinase superfamily. CAMK Ser/Thr protein kinase family. SNF1 subfamily. As to quaternary structure, interacts with CBL1 and CBL9. It depends on Mn(2+) as a cofactor.

The catalysed reaction is L-seryl-[protein] + ATP = O-phospho-L-seryl-[protein] + ADP + H(+). The enzyme catalyses L-threonyl-[protein] + ATP = O-phospho-L-threonyl-[protein] + ADP + H(+). Its function is as follows. CIPK serine-threonine protein kinases interact with CBL proteins. Binding of a CBL protein to the regulatory NAF domain of CIPK protein lead to the activation of the kinase in a calcium-dependent manner. In Arabidopsis thaliana (Mouse-ear cress), this protein is CBL-interacting serine/threonine-protein kinase 18 (CIPK18).